Here is a 360-residue protein sequence, read N- to C-terminus: UDP-N-acetylglucosamine--N-acetylmuramyl-(pentapeptide) pyrophosphoryl-undecaprenol N-acetylglucosamine transferase (360 aa).

UDP-N-acetyl-alpha-D-glucosamine is bound by residues 11 to 13 (TGG), N117, R160, S192, and Q294.

It belongs to the glycosyltransferase 28 family. MurG subfamily.

It is found in the cell inner membrane. The enzyme catalyses di-trans,octa-cis-undecaprenyl diphospho-N-acetyl-alpha-D-muramoyl-L-alanyl-D-glutamyl-meso-2,6-diaminopimeloyl-D-alanyl-D-alanine + UDP-N-acetyl-alpha-D-glucosamine = di-trans,octa-cis-undecaprenyl diphospho-[N-acetyl-alpha-D-glucosaminyl-(1-&gt;4)]-N-acetyl-alpha-D-muramoyl-L-alanyl-D-glutamyl-meso-2,6-diaminopimeloyl-D-alanyl-D-alanine + UDP + H(+). Its pathway is cell wall biogenesis; peptidoglycan biosynthesis. In terms of biological role, cell wall formation. Catalyzes the transfer of a GlcNAc subunit on undecaprenyl-pyrophosphoryl-MurNAc-pentapeptide (lipid intermediate I) to form undecaprenyl-pyrophosphoryl-MurNAc-(pentapeptide)GlcNAc (lipid intermediate II). The polypeptide is UDP-N-acetylglucosamine--N-acetylmuramyl-(pentapeptide) pyrophosphoryl-undecaprenol N-acetylglucosamine transferase (Rickettsia felis (strain ATCC VR-1525 / URRWXCal2) (Rickettsia azadi)).